Here is a 2581-residue protein sequence, read N- to C-terminus: Chromodomain-helicase-DNA-binding protein 8 (2581 aa).

Disordered regions lie at residues 22–114 (DDSF…QTST), 253–281 (VKGSAPAGNPGATGPPLKPAVTLTSTPAQ), and 349–375 (QKIQIVPQPPSSQPQPQPPPSAQPLTL). Polar residues-rich tracts occupy residues 42-64 (SLDSLDQMNQDGGSGDVGNSSAS) and 94-114 (DYTTQPTSQEQPAQPVLQTST). Residues 255-267 (GSAPAGNPGATGP) show a composition bias toward low complexity. The segment covering 355 to 370 (PQPPSSQPQPQPPPSA) has biased composition (pro residues). Phosphoserine is present on Ser432. Disordered regions lie at residues 473-584 (RARG…KRKK) and 596-616 (DEEEEEVDVTGPIKPEPILPE). Residues 493–516 (RPEEEGEKKRRKKSSGERLKEEKP) are compositionally biased toward basic and acidic residues. 2 positions are modified to phosphoserine: Ser553 and Ser562. Residues 572–584 (QKRRSNRQVKRKK) are compositionally biased toward basic residues. Residue Lys609 forms a Glycyl lysine isopeptide (Lys-Gly) (interchain with G-Cter in SUMO) linkage. Chromo domains are found at residues 642-709 (AIVD…AQMR) and 724-790 (VEVD…RVNR). Residues 823 to 997 (LFNWYNRQNC…FSLLHFLEPS (175 aa)) enclose the Helicase ATP-binding domain. ATP is bound at residue 836 to 843 (DEMGLGKT). The short motif at 948–951 (DEAH) is the DEAH box element. In terms of domain architecture, Helicase C-terminal spans 1137 to 1288 (LIDKLLPKLK…KAVLQSMSGR (152 aa)). Phosphoserine is present on residues Ser1420 and Ser1424. Positions 1692 to 1713 (EDPEYKPLQGPPKDPDDEGDPL) are disordered. Residues 1789–2302 (IARREKQQRW…LVELEVECME (514 aa)) are interaction with FAM124B. 2 positions are modified to phosphoserine: Ser1976 and Ser1978. A disordered region spans residues 1988–2016 (QCTSRTASPSPLRPDVPAEKSPEENAVQV). Thr1993 carries the post-translational modification Phosphothreonine. A phosphoserine mark is found at Ser1995, Ser1997, and Ser2008. A Glycyl lysine isopeptide (Lys-Gly) (interchain with G-Cter in SUMO2) cross-link involves residue Lys2025. Disordered regions lie at residues 2047-2118 (SSDT…YDEE) and 2179-2221 (NRRS…SSSA). Residues 2063 to 2072 (EDDDDSDSEL) show a composition bias toward acidic residues. Phosphoserine is present on residues Ser2068 and Ser2070. Residues 2075-2094 (SKLSPSSSSSSSSSSSSSSS) are compositionally biased toward low complexity. Basic and acidic residues predominate over residues 2102 to 2116 (EEKLTADRSRPKLYD). A phosphoserine mark is found at Ser2182, Ser2200, and Ser2202. Thr2204 is subject to Phosphothreonine. Phosphoserine is present on Ser2211. Residue Thr2215 is modified to Phosphothreonine. Ser2223 carries the phosphoserine modification. Residue Lys2256 forms a Glycyl lysine isopeptide (Lys-Gly) (interchain with G-Cter in SUMO2) linkage. Residues 2484–2581 (PHVDSSTMLH…NSDSSDDADD (98 aa)) are disordered. The span at 2492–2510 (LHHHHHHPHPHHHHHHHPG) shows a compositional bias: basic residues. Over residues 2513–2528 (TTGYPSSPATTTSGTA) the composition is skewed to low complexity. At Ser2519 the chain carries Phosphoserine. Over residues 2537–2550 (EDDDEEEDEDDDDL) the composition is skewed to acidic residues. The span at 2565 to 2574 (DDPMMPANSD) shows a compositional bias: low complexity.

Belongs to the SNF2/RAD54 helicase family. CHD8 subfamily. In terms of assembly, interacts with p53/TP53, histone H1 and CTCF. Component of some MLL1/MLL complex, at least composed of the core components KMT2A/MLL1, ASH2L, HCFC1/HCF1, WDR5 and RBBP5, as well as the facultative components BACC1, CHD8, E2F6, HSP70, INO80C, KANSL1, LAS1L, MAX, MCRS1, MGA, KAT8/MOF, PELP1, PHF20, PRP31, RING2, RUVB1/TIP49A, RUVB2/TIP49B, SENP3, TAF1, TAF4, TAF6, TAF7, TAF9 and TEX10. Interacts with CHD7. Interacts with FAM124B. Interacts with CTNNB1. Interacts with PIAS3. Interacts with TLK2. Interacts with HNRNPL in an RNA-dependent manner. Post-translationally, sumoylated.

The protein resides in the nucleus. It carries out the reaction ATP + H2O = ADP + phosphate + H(+). Its function is as follows. ATP-dependent chromatin-remodeling factor, it slides nucleosomes along DNA; nucleosome sliding requires ATP. Acts as a transcription repressor by remodeling chromatin structure and recruiting histone H1 to target genes. Suppresses p53/TP53-mediated apoptosis by recruiting histone H1 and preventing p53/TP53 transactivation activity. Acts as a negative regulator of Wnt signaling pathway by regulating beta-catenin (CTNNB1) activity. Negatively regulates CTNNB1-targeted gene expression by being recruited specifically to the promoter regions of several CTNNB1 responsive genes. Involved in both enhancer blocking and epigenetic remodeling at chromatin boundary via its interaction with CTCF. Acts as a suppressor of STAT3 activity by suppressing the LIF-induced STAT3 transcriptional activity. Also acts as a transcription activator via its interaction with ZNF143 by participating in efficient U6 RNA polymerase III transcription. Regulates alternative splicing of a core group of genes involved in neuronal differentiation, cell cycle and DNA repair. Enables H3K36me3-coupled transcription elongation and co-transcriptional RNA processing likely via interaction with HNRNPL. This is Chromodomain-helicase-DNA-binding protein 8 from Rattus norvegicus (Rat).